Here is a 319-residue protein sequence, read N- to C-terminus: Acetyl-coenzyme A carboxylase carboxyl transferase subunit alpha (319 aa).

A CoA carboxyltransferase C-terminal domain is found at Arg-39 to Glu-293.

The protein belongs to the AccA family. As to quaternary structure, acetyl-CoA carboxylase is a heterohexamer composed of biotin carboxyl carrier protein (AccB), biotin carboxylase (AccC) and two subunits each of ACCase subunit alpha (AccA) and ACCase subunit beta (AccD).

Its subcellular location is the cytoplasm. It catalyses the reaction N(6)-carboxybiotinyl-L-lysyl-[protein] + acetyl-CoA = N(6)-biotinyl-L-lysyl-[protein] + malonyl-CoA. It functions in the pathway lipid metabolism; malonyl-CoA biosynthesis; malonyl-CoA from acetyl-CoA: step 1/1. Functionally, component of the acetyl coenzyme A carboxylase (ACC) complex. First, biotin carboxylase catalyzes the carboxylation of biotin on its carrier protein (BCCP) and then the CO(2) group is transferred by the carboxyltransferase to acetyl-CoA to form malonyl-CoA. In Neisseria meningitidis serogroup C (strain 053442), this protein is Acetyl-coenzyme A carboxylase carboxyl transferase subunit alpha.